We begin with the raw amino-acid sequence, 154 residues long: Myoglobin (154 aa).

The 147-residue stretch at 2–148 (GLSDGEWQLV…FRNDMAAKYK (147 aa)) folds into the Globin domain. Position 4 is a phosphoserine (serine 4). A nitrite-binding site is contributed by histidine 65. Histidine 65 is an O2 binding site. Threonine 68 bears the Phosphothreonine mark. Histidine 94 provides a ligand contact to heme b.

Belongs to the globin family. As to quaternary structure, monomeric.

It localises to the cytoplasm. Its subcellular location is the sarcoplasm. It catalyses the reaction Fe(III)-heme b-[protein] + nitric oxide + H2O = Fe(II)-heme b-[protein] + nitrite + 2 H(+). It carries out the reaction H2O2 + AH2 = A + 2 H2O. Functionally, monomeric heme protein which primary function is to store oxygen and facilitate its diffusion within muscle tissues. Reversibly binds oxygen through a pentacoordinated heme iron and enables its timely and efficient release as needed during periods of heightened demand. Depending on the oxidative conditions of tissues and cells, and in addition to its ability to bind oxygen, it also has a nitrite reductase activity whereby it regulates the production of bioactive nitric oxide. Under stress conditions, like hypoxia and anoxia, it also protects cells against reactive oxygen species thanks to its pseudoperoxidase activity. The chain is Myoglobin (MB) from Sus scrofa (Pig).